The following is a 263-amino-acid chain: uncharacterized protein (263 aa).

An ATP-binding site is contributed by 31 to 38; the sequence is GPTGSGKT.

The protein belongs to the CbbQ/NirQ/NorQ/GpvN family.

This is an uncharacterized protein from Staphylococcus aureus (strain NCTC 8325 / PS 47).